A 122-amino-acid polypeptide reads, in one-letter code: Large ribosomal subunit protein uL14 (122 aa).

The protein belongs to the universal ribosomal protein uL14 family. In terms of assembly, part of the 50S ribosomal subunit. Forms a cluster with proteins L3 and L19. In the 70S ribosome, L14 and L19 interact and together make contacts with the 16S rRNA in bridges B5 and B8.

Functionally, binds to 23S rRNA. Forms part of two intersubunit bridges in the 70S ribosome. In Bacillus subtilis (strain 168), this protein is Large ribosomal subunit protein uL14.